A 281-amino-acid polypeptide reads, in one-letter code: RNA polymerase sigma factor RpoH (281 aa).

Residues 52-121 (LILSHLRFVI…IHEYVLRNWR (70 aa)) are sigma-70 factor domain-2. An Interaction with polymerase core subunit RpoC motif is present at residues 76–79 (DLIQ). Residues 226-277 (ALQSLDARSQDIIKARWLDDNKATLHDLAAKYNVSAERIRQLETNALKKLKS) are sigma-70 factor domain-4. The segment at residues 250–269 (LHDLAAKYNVSAERIRQLET) is a DNA-binding region (H-T-H motif).

Belongs to the sigma-70 factor family. RpoH subfamily. Interacts with the RNA polymerase core enzyme.

The protein localises to the cytoplasm. Its function is as follows. Sigma factors are initiation factors that promote the attachment of RNA polymerase to specific initiation sites and are then released. This sigma factor is involved in regulation of expression of heat shock genes. The polypeptide is RNA polymerase sigma factor RpoH (Haemophilus influenzae (strain ATCC 51907 / DSM 11121 / KW20 / Rd)).